Here is a 261-residue protein sequence, read N- to C-terminus: Large ribosomal subunit protein uL2 (261 aa).

The tract at residues 207–233 (VEHPHGGGNHQHIGKASTVKRGTPPGR) is disordered.

Belongs to the universal ribosomal protein uL2 family.

Its subcellular location is the cytoplasm. This is Large ribosomal subunit protein uL2 (RpL8) from Aedes albopictus (Asian tiger mosquito).